The sequence spans 117 residues: Ribonuclease P protein component (117 aa).

This sequence belongs to the RnpA family. In terms of assembly, consists of a catalytic RNA component (M1 or rnpB) and a protein subunit.

It catalyses the reaction Endonucleolytic cleavage of RNA, removing 5'-extranucleotides from tRNA precursor.. RNaseP catalyzes the removal of the 5'-leader sequence from pre-tRNA to produce the mature 5'-terminus. It can also cleave other RNA substrates such as 4.5S RNA. The protein component plays an auxiliary but essential role in vivo by binding to the 5'-leader sequence and broadening the substrate specificity of the ribozyme. The polypeptide is Ribonuclease P protein component (Lactococcus lactis subsp. lactis (strain IL1403) (Streptococcus lactis)).